The sequence spans 45 residues: Large ribosomal subunit protein bL34 (45 aa).

The segment covering 1 to 10 (MTQRTLGGTN) has biased composition (polar residues). The interval 1 to 45 (MTQRTLGGTNRKQKRTSGFRARMRKSNGRKVIQARRKKGRHRLSV) is disordered. Positions 11 to 45 (RKQKRTSGFRARMRKSNGRKVIQARRKKGRHRLSV) are enriched in basic residues.

The protein belongs to the bacterial ribosomal protein bL34 family.

The protein is Large ribosomal subunit protein bL34 of Crocosphaera subtropica (strain ATCC 51142 / BH68) (Cyanothece sp. (strain ATCC 51142)).